Reading from the N-terminus, the 543-residue chain is Protein male-specific lethal-3 (543 aa).

The Chromo domain occupies 10 to 90 (LFNRGEKVLC…KLQRELAEAA (81 aa)). A disordered region spans residues 93 to 247 (QKTGGYSYKD…THTTDAEKRI (155 aa)). 3 stretches are compositionally biased toward basic and acidic residues: residues 180-202 (RSRD…DNSS), 210-224 (KSKG…ERRS), and 234-247 (SPKD…EKRI). In terms of domain architecture, MRG spans 249 to 542 (QEDRVMLRIS…PLIDQGRELS (294 aa)).

In terms of assembly, component of the male-specific lethal (MSL) histone acetyltransferase complex, composed of mof, mle, msl-1, msl-2 and msl-3 proteins, as well as roX1 and roX2 non-coding RNAs. Ubiquitinated by msl-2.

It localises to the nucleus. The protein resides in the chromosome. Its function is as follows. Component of the male-specific lethal (MSL) histone acetyltransferase complex, a multiprotein complex essential for elevating transcription of the single X chromosome in the male (X chromosome dosage compensation). The MSL complex specifically associates with the single X chromosome in males and mediates formation of H4K16ac, promoting a two-fold activation of X chromosome. Acts as a histone reader that specifically recognizes and binds histone H3 trimethylated at 'Lys-36' (H3K36me3) and histone H4 monomethylated at 'Lys-20' (H4K20me1). Within the MSL complex, mediates the spreading of the MSL complex from initiation sites on the male X chromosome to flanking chromatin. Following initial recruitment of the MSL complex to male X chromosome by msl-2, msl-3 binds H3K36me3 and promotes spreading of the MSL complex in cis. In addition to its role in dosage compensation in males, promotes germline stem cell differentiation in females: recognizes and binds H3K36me3, promoting recruitment of the ATAC complex and transcription of genes, such as RpS19b. This Drosophila virilis (Fruit fly) protein is Protein male-specific lethal-3 (msl-3).